Reading from the N-terminus, the 563-residue chain is Endogenous retroviral envelope protein HEMO (563 aa).

The first 26 residues, 1–26 (MGSLSNYALLQLTLTAFLTILVQPQH), serve as a signal peptide directing secretion. The Extracellular portion of the chain corresponds to 27-488 (LLAPVFRTLS…IFAKVGDWFR (462 aa)). 2 N-linked (GlcNAc...) asparagine glycosylation sites follow: Asn-122 and Asn-192. A helical membrane pass occupies residues 489–509 (SWGYVLLIVLFCLFIFVLIYV). Residues 510-563 (RVFRKSRRSLNSQPLNLALSPQQSAQLLVSETSCQVSNRAMKGLTTHQYDTSLL) are Cytoplasmic-facing.

Belongs to the gamma type-C retroviral envelope protein family. N-glycosylated. In terms of processing, cleaved by some metalloproteinase at 432-Gln-Arg-433 (mainly) or 433-Arg-Gln-434, leading to release the secreted form (Endogenous retroviral envelope protein HEMO, secreted form) in the extracellular medium. As to expression, expressed at high level in the placenta and stem cells (at protein level). Also expressed in the kidney but at a lower level. Endogenous retroviral envelope protein HEMO, secreted form: Present in the blood of pregnant women (at protein level).

The protein resides in the cell membrane. It is found in the secreted. Endogenous envelope proteins originate from retroviral envelope proteins, which mediate receptor recognition and membrane fusion during early infection. Endogenous envelope proteins may have kept, lost or modified their original function during evolution. The protein is Endogenous retroviral envelope protein HEMO of Homo sapiens (Human).